A 462-amino-acid chain; its full sequence is tRNA pseudouridine(32) synthase, mitochondrial (462 aa).

Residues 1 to 24 constitute a mitochondrion transit peptide; sequence MQRNNRLRNLFTVPVIMARQLKRN. The S4 RNA-binding domain occupies 127–188; that stretch reads KLVDVFISEF…HEPPVTSRPI (62 aa). Residue D238 is part of the active site.

This sequence belongs to the pseudouridine synthase RluA family.

Its subcellular location is the mitochondrion. It carries out the reaction uridine(32) in tRNA = pseudouridine(32) in tRNA. Responsible for synthesis of pseudouridine from uracil-32 in mitochondrial transfer RNAs. The polypeptide is tRNA pseudouridine(32) synthase, mitochondrial (PUS9) (Saccharomyces cerevisiae (strain ATCC 204508 / S288c) (Baker's yeast)).